The primary structure comprises 283 residues: 4-diphosphocytidyl-2-C-methyl-D-erythritol kinase (283 aa).

Lys-10 is a catalytic residue. Pro-99–Ser-109 is a binding site for ATP. Residue Asp-141 is part of the active site.

Belongs to the GHMP kinase family. IspE subfamily. In terms of assembly, homodimer.

It catalyses the reaction 4-CDP-2-C-methyl-D-erythritol + ATP = 4-CDP-2-C-methyl-D-erythritol 2-phosphate + ADP + H(+). It participates in isoprenoid biosynthesis; isopentenyl diphosphate biosynthesis via DXP pathway; isopentenyl diphosphate from 1-deoxy-D-xylulose 5-phosphate: step 3/6. Catalyzes the phosphorylation of the position 2 hydroxy group of 4-diphosphocytidyl-2C-methyl-D-erythritol. This chain is 4-diphosphocytidyl-2-C-methyl-D-erythritol kinase, found in Salmonella typhi.